The chain runs to 525 residues: Zinc finger C2HC domain-containing protein 1C (525 aa).

A compositionally biased stretch (basic and acidic residues) spans alanine 23–tyrosine 34. Disordered regions lie at residues alanine 23–leucine 48, cysteine 85–leucine 107, and valine 145–serine 171. A compositionally biased stretch (polar residues) spans glutamine 36–leucine 48. Over residues glycine 90–glycine 102 the composition is skewed to low complexity. Residues threonine 207–isoleucine 252 are a coiled coil. Disordered regions lie at residues serine 292–tyrosine 316, asparagine 330–alanine 349, and leucine 356–leucine 379. The segment covering cysteine 301 to glutamine 312 has biased composition (polar residues). Low complexity predominate over residues serine 359–serine 373. 2 consecutive C2HC/C3H-type zinc fingers follow at residues glutamate 378–serine 407 and aspartate 487–arginine 516. Cysteine 382, cysteine 385, histidine 397, cysteine 401, cysteine 491, cysteine 494, histidine 506, and cysteine 510 together coordinate Zn(2+).

Belongs to the ZC2HC1 family. Requires Zn(2+) as cofactor.

In Rattus norvegicus (Rat), this protein is Zinc finger C2HC domain-containing protein 1C (Zc2hc1c).